The sequence spans 419 residues: ADIPOR-like receptor IZH3 (419 aa).

A disordered region spans residues 1–65 (MSHPNTHMPR…GEAGGGRSVL (65 aa)). Topologically, residues 1-147 (MSHPNTHMPR…LNAYGWHNET (147 aa)) are lumenal. Asn-145 carries an N-linked (GlcNAc...) asparagine glycan. A helical membrane pass occupies residues 148–168 (INIWSHLVGAAVLAYLLCWGW). At 169–184 (PRSDVYRAAQVPRLAK) the chain is on the cytoplasmic side. The chain crosses the membrane as a helical span at residues 185–205 (WAIGAFLACGVKCMASSVAWH). The Lumenal portion of the chain corresponds to 206 to 225 (TFNGTCHLKLRSRFVCVDYT). Residue Asn-208 is glycosylated (N-linked (GlcNAc...) asparagine). The helical transmembrane segment at 226–246 (GITLLVTASVVTTVAVTLYGL) threads the bilayer. Residues 247–249 (SRP) are Cytoplasmic-facing. The helical transmembrane segment at 250–270 (LMYAYMVASIGLGTAAGVMNW) threads the bilayer. Topologically, residues 271–283 (SPHFDRPEARPLR) are lumenal. The helical transmembrane segment at 284 to 304 (IAVYVGLAALGLVSFVHVWMQ) threads the bilayer. Residues 305–311 (VRWASAH) are Cytoplasmic-facing. A helical membrane pass occupies residues 312–332 (LMAPLVYKSLVWYGIGVVFYA). Residues 333–377 (TLVPERWRSDVTLDCCSGPVHEAACRQFRDLPPVARKDRQFWSLW) are Lumenal-facing. The chain crosses the membrane as a helical span at residues 378–398 (WVDYFCHSHFLWHVFVVLGVV). Residues 399–419 (GHYRAVLQMSRIVWLDAGRAF) are Cytoplasmic-facing.

The protein belongs to the ADIPOR family.

The protein resides in the endoplasmic reticulum membrane. Its function is as follows. ADIPOR-like receptor involved in zinc metabolism either by altering membrane sterol content or by directly altering cellular zinc levels. The sequence is that of ADIPOR-like receptor IZH3 (IZH3) from Eremothecium gossypii (strain ATCC 10895 / CBS 109.51 / FGSC 9923 / NRRL Y-1056) (Yeast).